Consider the following 494-residue polypeptide: Ubiquitin carboxyl-terminal hydrolase 27 (494 aa).

A helical membrane pass occupies residues 30 to 50; sequence LSFAGLLGVAGFVFAQQHGLF. Residues 74–494 enclose the USP domain; sequence PGLQNLGNNC…EASLLFYERL (421 aa). Cys83 (nucleophile) is an active-site residue. His440 (proton acceptor) is an active-site residue.

It belongs to the peptidase C19 family.

It localises to the membrane. The catalysed reaction is Thiol-dependent hydrolysis of ester, thioester, amide, peptide and isopeptide bonds formed by the C-terminal Gly of ubiquitin (a 76-residue protein attached to proteins as an intracellular targeting signal).. Functionally, recognizes and hydrolyzes the peptide bond at the C-terminal Gly of ubiquitin. Involved in the processing of poly-ubiquitin precursors as well as that of ubiquitinated proteins. This chain is Ubiquitin carboxyl-terminal hydrolase 27 (UBP27), found in Arabidopsis thaliana (Mouse-ear cress).